A 751-amino-acid chain; its full sequence is Photosystem I P700 chlorophyll a apoprotein A1 (751 aa).

The next 8 membrane-spanning stretches (helical) occupy residues 73–96 (VFSA…FHGA), 159–182 (LYTT…FHYH), 198–222 (LNHH…HVSL), 294–312 (TAHH…GHMY), 349–372 (WHAQ…HHMY), 388–414 (LSLF…IFMV), 436–458 (AIIS…LYIH), and 533–551 (FMVH…LILL). [4Fe-4S] cluster contacts are provided by Cys575 and Cys584. 2 helical membrane passes run 591–612 (HVFL…HFSW) and 665–687 (LSAY…LDIF). His676 lines the chlorophyll a' pocket. 2 residues coordinate chlorophyll a: Met683 and Tyr692. A phylloquinone-binding site is contributed by Trp693. Residues 725-745 (AVGVAHYLLGGIATTWSFFLA) traverse the membrane as a helical segment.

This sequence belongs to the PsaA/PsaB family. The PsaA/B heterodimer binds the P700 chlorophyll special pair and subsequent electron acceptors. PSI consists of a core antenna complex that captures photons, and an electron transfer chain that converts photonic excitation into a charge separation. The eukaryotic PSI reaction center is composed of at least 11 subunits. P700 is a chlorophyll a/chlorophyll a' dimer, A0 is one or more chlorophyll a, A1 is one or both phylloquinones and FX is a shared 4Fe-4S iron-sulfur center. serves as cofactor.

It localises to the plastid. Its subcellular location is the chloroplast thylakoid membrane. The enzyme catalyses reduced [plastocyanin] + hnu + oxidized [2Fe-2S]-[ferredoxin] = oxidized [plastocyanin] + reduced [2Fe-2S]-[ferredoxin]. In terms of biological role, psaA and PsaB bind P700, the primary electron donor of photosystem I (PSI), as well as the electron acceptors A0, A1 and FX. PSI is a plastocyanin/cytochrome c6-ferredoxin oxidoreductase, converting photonic excitation into a charge separation, which transfers an electron from the donor P700 chlorophyll pair to the spectroscopically characterized acceptors A0, A1, FX, FA and FB in turn. Oxidized P700 is reduced on the lumenal side of the thylakoid membrane by plastocyanin or cytochrome c6. This chain is Photosystem I P700 chlorophyll a apoprotein A1, found in Stigeoclonium helveticum (Green alga).